A 464-amino-acid polypeptide reads, in one-letter code: Fumarate hydratase class II (464 aa).

Substrate contacts are provided by residues 98 to 100, 129 to 132, 139 to 141, and T187; these read SGT, HPND, and SSN. H188 (proton donor/acceptor) is an active-site residue. S318 is a catalytic residue. Substrate contacts are provided by residues S319 and 324–326; that span reads KVN.

It belongs to the class-II fumarase/aspartase family. Fumarase subfamily. In terms of assembly, homotetramer.

Its subcellular location is the cytoplasm. It catalyses the reaction (S)-malate = fumarate + H2O. It participates in carbohydrate metabolism; tricarboxylic acid cycle; (S)-malate from fumarate: step 1/1. Its function is as follows. Involved in the TCA cycle. Catalyzes the stereospecific interconversion of fumarate to L-malate. This chain is Fumarate hydratase class II, found in Pasteurella multocida (strain Pm70).